Consider the following 585-residue polypeptide: Proline-rich protein 14 (585 aa).

M1 bears the N-acetylmethionine mark. The tract at residues 1–135 (MDLPGDSSPP…TLRRRSRTTP (135 aa)) is sufficient for heterochromatin association in interphase and chromatin association in anaphase. Disordered stretches follow at residues 23–46 (ALWGARSPKRPRLQLPGAPSPLEK), 73–150 (TSIP…RAPQ), and 189–241 (IVRQ…RPRL). The segment at 85 to 378 (PVHRQPPASP…MARAPPPPRP (294 aa)) is required for the interaction with GRB2 and sufficient to promote the phosphorylation of AKT and cell proliferation. A compositionally biased stretch (basic residues) spans 119-132 (RIHRTSSTLRRRSR). Residues 136–365 (GPEEGPSQKV…RPRPRRHTVG (230 aa)) are required for nuclear lamina association. The span at 193–205 (PTPPPGDLEPPFQ) shows a compositional bias: pro residues. S277 is modified (phosphoserine). Disordered stretches follow at residues 290–445 (EAEQ…KVSR) and 525–557 (DSSLPRSRRPSRGVRAAGGRTVPPNVAPSPDVG). Over residues 337–356 (LGPPGPGTCTWPPAPPQPSR) the composition is skewed to pro residues. The span at 393-409 (SPSLTTSCSSTASTSFS) shows a compositional bias: low complexity. Residues 518 to 535 (RRAVEFRDSSLPRSRRPS) form a required for nuclear localization region.

As to quaternary structure, interacts (via proline-rich region) with GRB2 (via SH3 domain 2). Interacts (via N-terminus) with CBX5.

It localises to the chromosome. The protein resides in the nucleus. The protein localises to the nucleus lamina. Its subcellular location is the nucleoplasm. Its function is as follows. Functions in tethering peripheral heterochromatin to the nuclear lamina during interphase, possibly through the interaction with heterochromatin protein CBX5/HP1 alpha. Might play a role in reattaching heterochromatin to the nuclear lamina at mitotic exit. Promotes myoblast differentiation during skeletal myogenesis, possibly by stimulating transcription factor MyoD activity via binding to CBX5/HP1 alpha. Involved in the positive regulation of the PI3K-Akt-mTOR signaling pathway and in promoting cell proliferation, possibly via binding to GRB2. This Homo sapiens (Human) protein is Proline-rich protein 14 (PRR14).